Consider the following 74-residue polypeptide: ATP synthase subunit 9, mitochondrial (74 aa).

The next 2 helical transmembrane spans lie at 8-28 and 50-70; these read MGAG…GNVF and ILGF…AFLI.

Belongs to the ATPase C chain family. F-type ATPases have 2 components, CF(1) - the catalytic core - and CF(0) - the membrane proton channel. CF(1) has five subunits: alpha(3), beta(3), gamma(1), delta(1), epsilon(1). CF(0) has three main subunits: a, b and c.

The protein resides in the mitochondrion membrane. This protein is one of the chains of the nonenzymatic membrane component (F0) of mitochondrial ATPase. This Solanum tuberosum (Potato) protein is ATP synthase subunit 9, mitochondrial (ATP9).